A 165-amino-acid polypeptide reads, in one-letter code: Deoxyuridine 5'-triphosphate nucleotidohydrolase (165 aa).

Substrate is bound by residues 66 to 68 (RSG), Asn79, 83 to 85 (TVD), and Lys93. The disordered stretch occupies residues 134–165 (ETSRGAGGHGSSGGHASLTPGARSAARVAQEG).

This sequence belongs to the dUTPase family. The cofactor is Mg(2+).

It carries out the reaction dUTP + H2O = dUMP + diphosphate + H(+). It functions in the pathway pyrimidine metabolism; dUMP biosynthesis; dUMP from dCTP (dUTP route): step 2/2. Functionally, this enzyme is involved in nucleotide metabolism: it produces dUMP, the immediate precursor of thymidine nucleotides and it decreases the intracellular concentration of dUTP so that uracil cannot be incorporated into DNA. This chain is Deoxyuridine 5'-triphosphate nucleotidohydrolase, found in Nocardia farcinica (strain IFM 10152).